Here is a 292-residue protein sequence, read N- to C-terminus: ATP synthase subunit a (292 aa).

The next 6 helical transmembrane spans lie at isoleucine 37 to cysteine 57, phenylalanine 96 to methionine 116, valine 144 to cysteine 164, proline 192 to alanine 212, leucine 230 to leucine 250, and alanine 263 to isoleucine 283.

The protein belongs to the ATPase A chain family. In terms of assembly, F-type ATPases have 2 components, CF(1) - the catalytic core - and CF(0) - the membrane proton channel. CF(1) has five subunits: alpha(3), beta(3), gamma(1), delta(1), epsilon(1). CF(0) has three main subunits: a(1), b(2) and c(9-12). The alpha and beta chains form an alternating ring which encloses part of the gamma chain. CF(1) is attached to CF(0) by a central stalk formed by the gamma and epsilon chains, while a peripheral stalk is formed by the delta and b chains.

The protein resides in the cell inner membrane. Key component of the proton channel; it plays a direct role in the translocation of protons across the membrane. This chain is ATP synthase subunit a, found in Paracidovorax citrulli (strain AAC00-1) (Acidovorax citrulli).